A 457-amino-acid polypeptide reads, in one-letter code: MSLYFNADTMRIERSSVHEPKRNRNVFLDVKPIADDANVNVPPRQAARRNATVFNNRVGFPPLTPKEAFVDAVPADQTCMVFESSKPIYLVLRAIGVLPYTRLPSGGTAFVLASPSMTYCVLFFLLLTVYIAFILLNRIEIVRTLEGRFEESVIAYLFIVNILPILIIPLMWYESRKVVSVVNGWVDFETVYRETTGRALELRLRTKAQVIAILLPILCSLSVAITHVTMVDFKLLQVIPYCVLDTITYMMGGYWYMACETLSITAKILAEDFQRALRHVGPAAKVSEYRSLWLRLSKLARDTGFSTCYTFTFICLYLFFIITLSIYGLMSQISDGFGVKDIGLAVTAFCSVGLLFYICDEAHYASFNVRTNFQKKLLMVELSWMNTDAQTEINMFLRATEMNPSSINLGGFFDVNRTLFKSLLATMVTYLVVLLQFQISIPDEPSAMLMHSNSSHS.

Residues 1-115 (MSLYFNADTM…GGTAFVLASP (115 aa)) are Cytoplasmic-facing. A helical transmembrane segment spans residues 116–136 (SMTYCVLFFLLLTVYIAFILL). Topologically, residues 137–152 (NRIEIVRTLEGRFEES) are extracellular. The chain crosses the membrane as a helical span at residues 153–173 (VIAYLFIVNILPILIIPLMWY). Topologically, residues 174 to 209 (ESRKVVSVVNGWVDFETVYRETTGRALELRLRTKAQ) are cytoplasmic. The helical transmembrane segment at 210 to 230 (VIAILLPILCSLSVAITHVTM) threads the bilayer. Residues 231–237 (VDFKLLQ) are Extracellular-facing. A helical transmembrane segment spans residues 238 to 258 (VIPYCVLDTITYMMGGYWYMA). Residues 259–309 (CETLSITAKILAEDFQRALRHVGPAAKVSEYRSLWLRLSKLARDTGFSTCY) are Cytoplasmic-facing. A helical membrane pass occupies residues 310–330 (TFTFICLYLFFIITLSIYGLM). Residues 331–341 (SQISDGFGVKD) lie on the Extracellular side of the membrane. Residues 342–362 (IGLAVTAFCSVGLLFYICDEA) traverse the membrane as a helical segment. At 363 to 421 (HYASFNVRTNFQKKLLMVELSWMNTDAQTEINMFLRATEMNPSSINLGGFFDVNRTLFK) the chain is on the cytoplasmic side. The chain crosses the membrane as a helical span at residues 422-442 (SLLATMVTYLVVLLQFQISIP). The Extracellular portion of the chain corresponds to 443–457 (DEPSAMLMHSNSSHS). Residue Asn-453 is glycosylated (N-linked (GlcNAc...) asparagine).

This sequence belongs to the insect chemoreceptor superfamily. Gustatory receptor (GR) family. Gr21a subfamily. Carbon dioxide-responsive neurons coexpress GPRgr22 and GPRgr24 in the maxillary palp, at both larval and adult life stages.

The protein resides in the cell membrane. In terms of biological role, gustatory receptor which mediates acceptance or avoidance behavior, depending on its substrates. GPRgr22 and GPRgr24 together are sufficient for olfactory carbon dioxide-chemosensation. This Anopheles gambiae (African malaria mosquito) protein is Gustatory and odorant receptor 24.